The following is a 508-amino-acid chain: Probable ligand-gated ion channel 46 (508 aa).

The signal sequence occupies residues 1–18 (MQYLQFLSLVVLLLMCHA). At 19-274 (RKSVYRRNSP…FEFKRRAGWY (256 aa)) the chain is on the extracellular side. Residues Asn-65, Asn-134, Asn-175, and Asn-201 are each glycosylated (N-linked (GlcNAc...) asparagine). Cys-190 and Cys-204 are oxidised to a cystine. A helical membrane pass occupies residues 275-295 (ILQAYLPTYLTICISWISFAL). At 296–301 (GSKAIP) the chain is on the cytoplasmic side. A helical membrane pass occupies residues 302–321 (ARTMLGVNSLLAMTFQFGNI). Residues 322 to 335 (IRNLPRVSYVKAID) are Extracellular-facing. The helical transmembrane segment at 336–356 (VWMLSCMTFVFCSLLELAWVG) threads the bilayer. At 357–480 (YLSREEEPTS…KQRREILAHK (124 aa)) the chain is on the cytoplasmic side. The tract at residues 374–407 (AQVAPKPCHPPPVQQNANNSSVHRRQKQPKNEEE) is disordered. The helical transmembrane segment at 481–501 (IDSVSVFMFPFLFVLFNIAYW) threads the bilayer. At 502 to 508 (QHYLRGY) the chain is on the extracellular side.

Belongs to the ligand-gated ion channel (TC 1.A.9) family. As to expression, expressed in the nervous system, with high expression in cholinergic motor neurons and weak expression in GABAergic motor neurons.

It localises to the presynaptic cell membrane. The protein localises to the cell projection. Its subcellular location is the axon. The protein resides in the cytoplasmic vesicle. It is found in the secretory vesicle. It localises to the synaptic vesicle. Functionally, probable component of a ligand-gated anion channel. Negatively regulates synaptic transmission and synaptic vesicle release in response to acetylcholine in cholinergic motor neurons. Role in synaptic vesicle release kinetics may be in association with the ligand-gated ion channel protein acc-4. The protein is Probable ligand-gated ion channel 46 of Caenorhabditis elegans.